Consider the following 206-residue polypeptide: Large ribosomal subunit protein uL4 (206 aa).

A disordered region spans residues 43–78; it reads ARSGNRKQKDREEVHHTTKKPWRQKGTGRARAGMSS. The span at 49-58 shows a compositional bias: basic and acidic residues; it reads KQKDREEVHH. Residues 59 to 70 show a composition bias toward basic residues; sequence TTKKPWRQKGTG.

This sequence belongs to the universal ribosomal protein uL4 family. As to quaternary structure, part of the 50S ribosomal subunit.

Its function is as follows. One of the primary rRNA binding proteins, this protein initially binds near the 5'-end of the 23S rRNA. It is important during the early stages of 50S assembly. It makes multiple contacts with different domains of the 23S rRNA in the assembled 50S subunit and ribosome. In terms of biological role, forms part of the polypeptide exit tunnel. The sequence is that of Large ribosomal subunit protein uL4 from Janthinobacterium sp. (strain Marseille) (Minibacterium massiliensis).